A 280-amino-acid chain; its full sequence is Formamidopyrimidine-DNA glycosylase (280 aa).

The Schiff-base intermediate with DNA role is filled by proline 2. The Proton donor role is filled by glutamate 3. Residue lysine 59 is the Proton donor; for beta-elimination activity of the active site. The DNA site is built by histidine 92 and arginine 111. The segment at 239-273 (NVYGQTGLPCNRCGTPIVKTKVAQRGTHYCPQCQQ) adopts an FPG-type zinc-finger fold. Arginine 263 functions as the Proton donor; for delta-elimination activity in the catalytic mechanism.

The protein belongs to the FPG family. Monomer. The cofactor is Zn(2+).

It catalyses the reaction Hydrolysis of DNA containing ring-opened 7-methylguanine residues, releasing 2,6-diamino-4-hydroxy-5-(N-methyl)formamidopyrimidine.. The enzyme catalyses 2'-deoxyribonucleotide-(2'-deoxyribose 5'-phosphate)-2'-deoxyribonucleotide-DNA = a 3'-end 2'-deoxyribonucleotide-(2,3-dehydro-2,3-deoxyribose 5'-phosphate)-DNA + a 5'-end 5'-phospho-2'-deoxyribonucleoside-DNA + H(+). Its function is as follows. Involved in base excision repair of DNA damaged by oxidation or by mutagenic agents. Acts as a DNA glycosylase that recognizes and removes damaged bases. Has a preference for oxidized purines, such as 7,8-dihydro-8-oxoguanine (8-oxoG). Has AP (apurinic/apyrimidinic) lyase activity and introduces nicks in the DNA strand. Cleaves the DNA backbone by beta-delta elimination to generate a single-strand break at the site of the removed base with both 3'- and 5'-phosphates. This chain is Formamidopyrimidine-DNA glycosylase, found in Enterococcus faecalis (strain ATCC 700802 / V583).